Here is a 397-residue protein sequence, read N- to C-terminus: MKNKYYPLRSSMDELSTKNDNEIDLEKGPLPEYNSEDGNTLPPYSENINLKDPKQMGQNITKLFNWNKSTTPPDYDENRLPITDEGNNPPNTHRENHSSGTADNSSPFLIKLIISFTPIFVLNVPAVCYLTYKDALFKDYGKDEWVYFGVWCAICLMSFISLWCFYETWTKAVKVTVIFLAQCVKVTVIFLAQCVKVTAIFSAQCIKVTVISLAKCVKVIAVGLYNSKKDLVVTIWLAWVVICFILFGCVKDGRLNLNKALICSTSSISAALFFILLLVCIPIWTLKHMLFGLFQVLGVQSCVVIVTKGLMYLFDKHIDATGYEIEASSLFVIGNFLFFYEMERPGALKRMPKFIRNGIASFLGGIANAFGGIANAIRGANDNNDIPLGEMEVESEV.

Disordered regions lie at residues 1 to 41 (MKNK…GNTL) and 65 to 102 (NWNKSTTPPDYDENRLPITDEGNNPPNTHRENHSSGTA). Residues 11–29 (SMDELSTKNDNEIDLEKGP) are compositionally biased toward basic and acidic residues. 9 helical membrane-spanning segments follow: residues 108–128 (FLIKLIISFTPIFVLNVPAVC), 145–165 (WVYFGVWCAICLMSFISLWCF), 175–195 (VTVIFLAQCVKVTVIFLAQCV), 205–225 (CIKVTVISLAKCVKVIAVGLY), 230–250 (DLVVTIWLAWVVICFILFGCV), 266–286 (SSISAALFFILLLVCIPIWTL), 290–310 (LFGLFQVLGVQSCVVIVTKGL), 320–340 (ATGYEIEASSLFVIGNFLFFY), and 357–377 (NGIASFLGGIANAFGGIANAI).

This sequence belongs to the WTF family. As to quaternary structure, homomer. Forms protein aggregates. The two isoforms can interact with each other and with themselves. High sequence similarity is required for their interaction.

It is found in the spore membrane. The protein localises to the vacuole membrane. It localises to the ascus epiplasm. The protein resides in the cytoplasm. Its subcellular location is the endoplasmic reticulum membrane. Promotes unequal transmission of alleles from the parental zygote to progeny spores by acting as poison/antidote system where the poison and antidote proteins are produced from the same locus; the poison component is trans-acting and targets all spores within an ascus whereas the antidote component is spore-specific, leading to poisoning of all progeny that do not inherit the allele. Its function is as follows. Localizes isoform 2 to the vacuole thereby facilitating its degradation. Functionally, forms toxic aggregates that disrupt spore maturation. The polypeptide is Meiotic driver wtf28 (Schizosaccharomyces kambucha (Fission yeast)).